The following is a 732-amino-acid chain: Ferric aerobactin receptor (732 aa).

The N-terminal stretch at 1–25 is a signal peptide; the sequence is MMISKKYTLWALNPLLLTMMAPAVA. The TonB box motif lies at 31 to 38; that stretch reads ETFVVSAN. Positions 43 to 153 constitute a TBDR plug domain; sequence TVAEMAQTTW…TGGLINIVTK (111 aa). The 575-residue stretch at 158-732 folds into the TBDR beta-barrel domain; that stretch reads ETMMEFEAGT…TFGLNYSVLF (575 aa). The TonB C-terminal box signature appears at 715–732; sequence YDYKGRGRTFGLNYSVLF.

Belongs to the TonB-dependent receptor family.

The protein resides in the cell outer membrane. In terms of biological role, receptor for cloacin DF13/aerobactin. The polypeptide is Ferric aerobactin receptor (iutA) (Escherichia coli).